Reading from the N-terminus, the 463-residue chain is Increased DNA methylation 3 (463 aa).

Basic and acidic residues predominate over residues 169-182; sequence NLDESRETEQDCSR. Disordered regions lie at residues 169–199 and 300–347; these read NLDE…DYNS and RRFK…TTGT. Polar residues predominate over residues 184-199; that stretch reads GDATANGVVTNEDYNS. Positions 300–310 are enriched in basic residues; the sequence is RRFKNSSKKAT.

Interacts with MBD7 (via C-terminus), IDM1 and IDM2. Part of a complex made of MBD7, IDM1, IDM2 and IDM3.

The protein resides in the nucleus. Its function is as follows. Acts as an anti-silencing factor that prevents DNA hypermethylation and gene repression. The protein is Increased DNA methylation 3 of Arabidopsis thaliana (Mouse-ear cress).